The primary structure comprises 154 residues: Ribosome maturation factor RimP (154 aa).

This sequence belongs to the RimP family.

The protein localises to the cytoplasm. Functionally, required for maturation of 30S ribosomal subunits. The chain is Ribosome maturation factor RimP from Clostridium kluyveri (strain ATCC 8527 / DSM 555 / NBRC 12016 / NCIMB 10680 / K1).